Reading from the N-terminus, the 1001-residue chain is Receptor-type tyrosine-protein phosphatase N2 (1001 aa).

An N-terminal signal peptide occupies residues 1 to 27 (MGPPLPLLLLLLLPPPLPRALPAPASA). The interval 1 to 407 (MGPPLPLLLL…PEGPLLEKSS (407 aa)) is involved in localization to secretory granules; interaction with CPE. Topologically, residues 28–600 (RGRQLPGRLG…HQEEQEDSTK (573 aa)) are extracellular. Arg-259 carries the post-translational modification Omega-N-methylarginine. 3 disordered regions span residues 271–296 (PFSA…SMDD), 308–359 (QQNS…DAPE), and 394–459 (SPLL…LEDQ). Basic and acidic residues predominate over residues 312 to 325 (EVDRLGPLKEEKAD). A Phosphoserine modification is found at Ser-339. The segment covering 340–355 (QESHGRGAEGQPREQT) has biased composition (basic and acidic residues). Low complexity predominate over residues 394-404 (SPLLPEGPLLE). Basic and acidic residues predominate over residues 405–416 (KSSREEIKKSEQ). Over residues 417-428 (PEEVLSSEEETA) the composition is skewed to acidic residues. Ser-422 and Ser-423 each carry phosphoserine. Basic and acidic residues predominate over residues 429 to 459 (GVEHVRSRTYSKDLFERKPNSEPQPRRLEDQ). An N-linked (GlcNAc...) asparagine glycan is attached at Asn-550. The chain crosses the membrane as a helical span at residues 601–621 (FILLTFLSIACILGVLLASSL). Residues 622–1001 (AYCLRHNSHY…VNAILKALPQ (380 aa)) are Cytoplasmic-facing. A Tyrosine-based internalization motif motif is present at residues 652 to 661 (YQELCRQRMA). The disordered stretch occupies residues 663–705 (RPQDRSEGPHTSRINSVSSQFSDGPMPSPSARSSTSSWSEEPV). The span at 674–684 (SRINSVSSQFS) shows a compositional bias: polar residues. Residues Ser-678 and Ser-684 each carry the phosphoserine modification. Over residues 691–705 (PSARSSTSSWSEEPV) the composition is skewed to low complexity. The residue at position 697 (Thr-697) is a Phosphothreonine. The Tyrosine-protein phosphatase domain maps to 731-991 (LEKEWEALCA…EFALTAVAEE (261 aa)). Substrate contacts are provided by residues Asp-899 and 931–937 (CSDGAGR). Residue Cys-931 is the Phosphocysteine intermediate of the active site. Position 956 is an N6-acetyllysine (Lys-956). Gln-976 is a substrate binding site. The short motif at 990–996 (EEVNAIL) is the Leucine-based sorting signal element.

This sequence belongs to the protein-tyrosine phosphatase family. Self-associates. Interacts (via cytoplasmic domain) with PTPRN (via cytoplasmic domain). Interacts (precursor form) with CPE. Interacts with HAP1 isoform A. Interacts with AP2A1 or AP2A2 and AP1G1; indicative for an association with adaptor protein complex 2 (AP-2) and adaptor protein complex 1 (AP-1). Interacts with AP2M1; indicative for an association with adaptor protein complex 2 (AP-2). Interacts with MYO5A. In terms of processing, subject to proteolytic cleavage at multiple sites during maturation of secretory granules. In the brain at least IA-2beta71, IA-2beta64 and IA-2beta60 have been detected, in the pancreas and a pancreatic beta cell line only IA-2beta60 has been detected. As to expression, detected in brain. Detected in pancreas islets (at protein level). Detected in pancreas and brain.

It localises to the cytoplasmic vesicle. The protein localises to the secretory vesicle membrane. Its subcellular location is the secretory vesicle. The protein resides in the synaptic vesicle membrane. It catalyses the reaction O-phospho-L-tyrosyl-[protein] + H2O = L-tyrosyl-[protein] + phosphate. Plays a role in vesicle-mediated secretory processes. Required for normal accumulation of secretory vesicles in hippocampus, pituitary and pancreatic islets. Required for the accumulation of normal levels of insulin-containing vesicles and preventing their degradation. Plays a role in insulin secretion in response to glucose stimuli. Required for normal accumulation of the neurotransmitters norepinephrine, dopamine and serotonin in the brain. In females, but not in males, required for normal accumulation and secretion of pituitary hormones, such as luteinizing hormone (LH) and follicle-stimulating hormone (FSH). Required to maintain normal levels of renin expression and renin release. May regulate catalytic active protein-tyrosine phosphatases such as PTPRA through dimerization. Has phosphatidylinositol phosphatase activity; the PIPase activity is involved in its ability to regulate insulin secretion. Can dephosphorylate phosphatidylinositol 4,5-biphosphate (PI(4,5)P2), phosphatidylinositol 5-phosphate and phosphatidylinositol 3-phosphate. Regulates PI(4,5)P2 level in the plasma membrane and localization of cofilin at the plasma membrane and thus is indirectly involved in regulation of actin dynamics related to cell migration and metastasis; upon hydrolysis of PI(4,5)P2 cofilin is released from the plasma membrane and acts in the cytoplasm in severing F-actin filaments. The sequence is that of Receptor-type tyrosine-protein phosphatase N2 (Ptprn2) from Mus musculus (Mouse).